A 282-amino-acid polypeptide reads, in one-letter code: tRNA (guanine-N(1)-)-methyltransferase (282 aa).

145-150 (IGDYVL) contributes to the S-adenosyl-L-methionine binding site.

This sequence belongs to the RNA methyltransferase TrmD family. Homodimer.

It localises to the cytoplasm. It carries out the reaction guanosine(37) in tRNA + S-adenosyl-L-methionine = N(1)-methylguanosine(37) in tRNA + S-adenosyl-L-homocysteine + H(+). Its function is as follows. Specifically methylates guanosine-37 in various tRNAs. In Streptomyces avermitilis (strain ATCC 31267 / DSM 46492 / JCM 5070 / NBRC 14893 / NCIMB 12804 / NRRL 8165 / MA-4680), this protein is tRNA (guanine-N(1)-)-methyltransferase.